Consider the following 124-residue polypeptide: MISETIRSGDWKGEKHVPVIEYEREGELVKVKVQVGKEIPHPNTTEHHIRYIELYFLPEGENFVYQVGRVEFTAHGESVNGPNTSDVYTEPIAYFVLKTKKKGKLYALSYCNIHGLWENEVTLE.

Fe cation-binding residues include glutamate 14, histidine 16, histidine 41, histidine 47, cysteine 111, and histidine 114.

The protein belongs to the desulfoferrodoxin family. In terms of assembly, homotetramer. Fe cation is required as a cofactor.

It catalyses the reaction reduced [rubredoxin] + superoxide + 2 H(+) = oxidized [rubredoxin] + H2O2. Its function is as follows. Uses electrons from reduced NADP, by way of rubredoxin and an oxidoreductase, to catalyze the reduction of superoxide to hydrogen peroxide. In Pyrococcus furiosus (strain ATCC 43587 / DSM 3638 / JCM 8422 / Vc1), this protein is Superoxide reductase (sorA).